Consider the following 399-residue polypeptide: Exodeoxyribonuclease 7 large subunit (399 aa).

The protein belongs to the XseA family. As to quaternary structure, heterooligomer composed of large and small subunits.

It is found in the cytoplasm. The catalysed reaction is Exonucleolytic cleavage in either 5'- to 3'- or 3'- to 5'-direction to yield nucleoside 5'-phosphates.. In terms of biological role, bidirectionally degrades single-stranded DNA into large acid-insoluble oligonucleotides, which are then degraded further into small acid-soluble oligonucleotides. In Clostridium botulinum (strain Eklund 17B / Type B), this protein is Exodeoxyribonuclease 7 large subunit.